The following is a 61-amino-acid chain: Sperm protamine P1 (61 aa).

The tract at residues 1–61 (MARYRRRSRS…RRYSRRGRRR (61 aa)) is disordered.

Belongs to the protamine P1 family. As to expression, testis.

It localises to the nucleus. The protein localises to the chromosome. Protamines substitute for histones in the chromatin of sperm during the haploid phase of spermatogenesis. They compact sperm DNA into a highly condensed, stable and inactive complex. This Dasyurus hallucatus (Northern quoll) protein is Sperm protamine P1 (PRM1).